A 499-amino-acid polypeptide reads, in one-letter code: Probable cytosol aminopeptidase (499 aa).

The Mn(2+) site is built by lysine 271 and aspartate 276. Lysine 283 is an active-site residue. Mn(2+)-binding residues include aspartate 294, aspartate 353, and glutamate 355. Arginine 357 is an active-site residue.

The protein belongs to the peptidase M17 family. It depends on Mn(2+) as a cofactor.

It localises to the cytoplasm. It catalyses the reaction Release of an N-terminal amino acid, Xaa-|-Yaa-, in which Xaa is preferably Leu, but may be other amino acids including Pro although not Arg or Lys, and Yaa may be Pro. Amino acid amides and methyl esters are also readily hydrolyzed, but rates on arylamides are exceedingly low.. It carries out the reaction Release of an N-terminal amino acid, preferentially leucine, but not glutamic or aspartic acids.. Functionally, presumably involved in the processing and regular turnover of intracellular proteins. Catalyzes the removal of unsubstituted N-terminal amino acids from various peptides. The polypeptide is Probable cytosol aminopeptidase (Bordetella bronchiseptica (strain ATCC BAA-588 / NCTC 13252 / RB50) (Alcaligenes bronchisepticus)).